The following is a 402-amino-acid chain: Acetate kinase (402 aa).

Asn7 provides a ligand contact to Mg(2+). Lys14 contributes to the ATP binding site. A substrate-binding site is contributed by Arg95. Asp152 serves as the catalytic Proton donor/acceptor. Residues 212-216 (HLGNG), 286-288 (DMR), and 334-338 (GIGEN) each bind ATP. Residue Glu388 participates in Mg(2+) binding.

The protein belongs to the acetokinase family. In terms of assembly, homodimer. It depends on Mg(2+) as a cofactor. Requires Mn(2+) as cofactor.

The protein localises to the cytoplasm. The catalysed reaction is acetate + ATP = acetyl phosphate + ADP. The protein operates within metabolic intermediate biosynthesis; acetyl-CoA biosynthesis; acetyl-CoA from acetate: step 1/2. In terms of biological role, catalyzes the formation of acetyl phosphate from acetate and ATP. Can also catalyze the reverse reaction. The chain is Acetate kinase from Nitratidesulfovibrio vulgaris (strain DP4) (Desulfovibrio vulgaris).